The chain runs to 128 residues: MNYTVLVTGSAYGTQNASTAFLFCQSLIKMSHILNSVFFYCDGVLNANNFNKPSVDEFDLLSAWKQLNEKNKVKLYVCVSAASRRGVIEDEKISNTKIKNGNFASFFQSSGLLELAYSIKISDRIIQF.

Residue C78 is the Cysteine persulfide intermediate of the active site.

The protein belongs to the DsrE/TusD family. As to quaternary structure, heterohexamer, formed by a dimer of trimers. The hexameric TusBCD complex contains 2 copies each of TusB, TusC and TusD. The TusBCD complex interacts with TusE.

The protein localises to the cytoplasm. Part of a sulfur-relay system required for 2-thiolation of 5-methylaminomethyl-2-thiouridine (mnm(5)s(2)U) at tRNA wobble positions. Accepts sulfur from TusA and transfers it in turn to TusE. The chain is Sulfurtransferase TusD from Buchnera aphidicola subsp. Schizaphis graminum (strain Sg).